The chain runs to 290 residues: GTPase Era (290 aa).

Residues 2 to 169 form the Era-type G domain; sequence KSGFAAILGR…KNKIYENFSE (168 aa). The segment at 10–17 is G1; the sequence is GRPSTGKS. 10–17 contributes to the GTP binding site; it reads GRPSTGKS. The segment at 36 to 40 is G2; that stretch reads QTTRN. The tract at residues 57 to 60 is G3; the sequence is DTPG. Residues 57 to 61 and 119 to 122 contribute to the GTP site; these read DTPGF and NKVD. Residues 119-122 are G4; sequence NKVD. The segment at 148–150 is G5; the sequence is ISA. A KH type-2 domain is found at 200-276; sequence LKEELPYSLY…NLFLQVKLKK (77 aa).

The protein belongs to the TRAFAC class TrmE-Era-EngA-EngB-Septin-like GTPase superfamily. Era GTPase family. As to quaternary structure, monomer.

The protein resides in the cytoplasm. It is found in the cell inner membrane. In terms of biological role, an essential GTPase that binds both GDP and GTP, with rapid nucleotide exchange. Plays a role in 16S rRNA processing and 30S ribosomal subunit biogenesis and possibly also in cell cycle regulation and energy metabolism. The polypeptide is GTPase Era (Borreliella afzelii (strain PKo) (Borrelia afzelii)).